A 210-amino-acid chain; its full sequence is Uracil phosphoribosyltransferase (210 aa).

5-phospho-alpha-D-ribose 1-diphosphate is bound by residues Arg77, Arg102, and 129–137; that span reads DPMLATGAS. Residues Ile195 and 200-202 each bind uracil; that span reads GDA. Residue Asp201 coordinates 5-phospho-alpha-D-ribose 1-diphosphate.

This sequence belongs to the UPRTase family. Requires Mg(2+) as cofactor.

It catalyses the reaction UMP + diphosphate = 5-phospho-alpha-D-ribose 1-diphosphate + uracil. It participates in pyrimidine metabolism; UMP biosynthesis via salvage pathway; UMP from uracil: step 1/1. Its activity is regulated as follows. Allosterically activated by GTP. Its function is as follows. Catalyzes the conversion of uracil and 5-phospho-alpha-D-ribose 1-diphosphate (PRPP) to UMP and diphosphate. This Mycoplasmoides gallisepticum (strain R(low / passage 15 / clone 2)) (Mycoplasma gallisepticum) protein is Uracil phosphoribosyltransferase.